A 339-amino-acid chain; its full sequence is Phenylalanine--tRNA ligase alpha subunit (339 aa).

Glu-250 contacts Mg(2+).

It belongs to the class-II aminoacyl-tRNA synthetase family. Phe-tRNA synthetase alpha subunit type 1 subfamily. Tetramer of two alpha and two beta subunits. Mg(2+) is required as a cofactor.

The protein resides in the cytoplasm. It carries out the reaction tRNA(Phe) + L-phenylalanine + ATP = L-phenylalanyl-tRNA(Phe) + AMP + diphosphate + H(+). This Bacteroides fragilis (strain ATCC 25285 / DSM 2151 / CCUG 4856 / JCM 11019 / LMG 10263 / NCTC 9343 / Onslow / VPI 2553 / EN-2) protein is Phenylalanine--tRNA ligase alpha subunit.